A 240-amino-acid polypeptide reads, in one-letter code: uncharacterized protein (240 aa).

This is an uncharacterized protein from Methanocaldococcus jannaschii (strain ATCC 43067 / DSM 2661 / JAL-1 / JCM 10045 / NBRC 100440) (Methanococcus jannaschii).